The chain runs to 147 residues: UPF0178 protein AFE_3267 (147 aa).

It belongs to the UPF0178 family.

The protein is UPF0178 protein AFE_3267 of Acidithiobacillus ferrooxidans (strain ATCC 23270 / DSM 14882 / CIP 104768 / NCIMB 8455) (Ferrobacillus ferrooxidans (strain ATCC 23270)).